The primary structure comprises 228 residues: Hematopoietically-expressed homeobox protein hhex (228 aa).

The homeobox DNA-binding region spans 117–176; the sequence is RKGGQVRFSNDQTIELEKKFETQKYLSPPERKRLAKMLQLSERQVKTWFQNRRAKWRRLK. The segment at 175–228 is disordered; that stretch reads LKQENPPSTGKREAEDSDTRRLSDAAARARELESGASTDSEELLDIEDEHQFTL. Residues 184–207 are compositionally biased toward basic and acidic residues; the sequence is GKREAEDSDTRRLSDAAARARELE. Residues 213 to 222 are compositionally biased toward acidic residues; sequence DSEELLDIED.

Expressed in embryonic endothelial and blood lineages. From late-blastula stage, expression is restricted to the dorsal marginal region of the extraembryonic yolk syncytial layer (YSL). By the onset of gastrulation, expressed in the entire dorsal half of the YSL. Post-gastrulation, expression appears in both anterior and posterior lateral plate mesoderm by the 3-somite stage. Posteriorly, expression is in the intermediate cell mass (ICM), which contains both endothelial and blood precursors. Subsequently expressed in the developing endothelial cells including the endocardium until the onset of circulation (24 hpf) and disappears completely by 30 hpf, at which point expression is seen in the thyroid and liver primordia. Also expressed in the developing biliary tree and pancreas.

The protein localises to the nucleus. Functionally, recognizes the DNA sequence 5'-ATTAA-3'. Transcriptional repressor. Regulates the differentiation of both endothelial and blood cells. Plays a role in embryonic dorsoventral patterning by regulating bmp expression. May establish anterior identity. Functions in the embryo to regulate liver development. Functions extraembryonically to generate organ chirality. This is Hematopoietically-expressed homeobox protein hhex from Danio rerio (Zebrafish).